Reading from the N-terminus, the 249-residue chain is uncharacterized protein (249 aa).

The N-terminal stretch at 1-36 (MAKSPARRCTAKVRRVLSRSVLILCWSLLGAAPAHA) is a signal peptide. Residues 227-249 (ARQPPGRWVCPSSAGGPIGWHRQ) form a disordered region.

This is an uncharacterized protein from Mycobacterium tuberculosis (strain CDC 1551 / Oshkosh).